The chain runs to 304 residues: Ribosomal RNA small subunit methyltransferase H (304 aa).

S-adenosyl-L-methionine-binding positions include 37–39, D57, F79, D100, and H107; that span reads GGH.

Belongs to the methyltransferase superfamily. RsmH family.

It localises to the cytoplasm. It catalyses the reaction cytidine(1402) in 16S rRNA + S-adenosyl-L-methionine = N(4)-methylcytidine(1402) in 16S rRNA + S-adenosyl-L-homocysteine + H(+). Its function is as follows. Specifically methylates the N4 position of cytidine in position 1402 (C1402) of 16S rRNA. The sequence is that of Ribosomal RNA small subunit methyltransferase H from Bacteroides fragilis (strain ATCC 25285 / DSM 2151 / CCUG 4856 / JCM 11019 / LMG 10263 / NCTC 9343 / Onslow / VPI 2553 / EN-2).